Here is a 411-residue protein sequence, read N- to C-terminus: Probable tRNA pseudouridine synthase D (411 aa).

The active-site Nucleophile is Asp-81. The region spanning 154 to 375 is the TRUD domain; that stretch reads GTPNFFGLQR…SGSYRPADTL (222 aa).

The protein belongs to the pseudouridine synthase TruD family.

It catalyses the reaction uridine(13) in tRNA = pseudouridine(13) in tRNA. Its function is as follows. Could be responsible for synthesis of pseudouridine from uracil-13 in transfer RNAs. The polypeptide is Probable tRNA pseudouridine synthase D (Archaeoglobus fulgidus (strain ATCC 49558 / DSM 4304 / JCM 9628 / NBRC 100126 / VC-16)).